The primary structure comprises 212 residues: Peroxisomal membrane protein 4 (212 aa).

Helical transmembrane passes span 97 to 117 (GGTH…LLFG) and 151 to 171 (LKWD…LWLF). Asparagine 206 is a glycosylation site (N-linked (GlcNAc...) asparagine).

The protein belongs to the peroxisomal membrane protein PXMP2/4 family. Interacts with PEX19. In terms of tissue distribution, liver.

The protein resides in the peroxisome membrane. This Rattus norvegicus (Rat) protein is Peroxisomal membrane protein 4 (Pxmp4).